Consider the following 530-residue polypeptide: NMDA receptor synaptonuclear signaling and neuronal migration factor (530 aa).

The N-myristoyl glycine moiety is linked to residue Gly2. The segment at 2–233 (GAAASRRRAL…FSFQTATTTM (232 aa)) is necessary and sufficient to elicit dendritic processes and synaptic contacts. Disordered regions lie at residues 34–67 (SQSH…APQN) and 125–197 (KGRR…GRRK). The span at 38–48 (PENRNGADHLL) shows a compositional bias: basic and acidic residues. A compositionally biased stretch (basic residues) spans 125–137 (KGRRQRHPHHHSQ). Over residues 153 to 162 (PCQSWAGSRQ) the composition is skewed to polar residues. Phosphoserine is present on Ser204. The Nuclear localization signal signature appears at 247–250 (RRKR). Residues 285-312 (RSFSRSWSDPTPMKADTSHDSRDSSDLQ) are disordered. Ser290 and Ser292 each carry phosphoserine. The span at 300-309 (DTSHDSRDSS) shows a compositional bias: basic and acidic residues.

It belongs to the NSMF family. As to quaternary structure, interacts with KPNA1; the interaction occurs in a calcium-independent manner after synaptic NMDA receptor stimulation and is required for nuclear import of NSMF but is competed by CABP1. Interacts (via the central NLS-containing motif region) with CABP1 (via EF-hands 1 and 2); the interaction occurs in a calcium-dependent manner after synaptic NMDA receptor stimulation and prevents the nuclear import of NSMF. Cannot be competed by calmodulin. Post-translationally, proteolytically processed after NMDA receptor activation. Cleaved in a calcium-dependent and calpain-sensitive manner. Calpain cleavage is essential for the translocation process from dendrites to the nucleus. As to expression, highly expressed in adult and fetal brain. Weakly expressed in heart, liver, spleen, testis, small intestine, skeletal muscle, peripheral white blood cells and kidney.

Its subcellular location is the nucleus. It localises to the nucleus envelope. It is found in the nucleus membrane. The protein localises to the nucleus matrix. The protein resides in the cytoplasm. Its subcellular location is the cell cortex. It localises to the cytoskeleton. It is found in the cell membrane. The protein localises to the cell projection. The protein resides in the dendrite. Its subcellular location is the synapse. It localises to the synaptosome. It is found in the postsynaptic density. The protein localises to the membrane. In terms of biological role, couples NMDA-sensitive glutamate receptor signaling to the nucleus and triggers long-lasting changes in the cytoarchitecture of dendrites and spine synapse processes. Part of the cAMP response element-binding protein (CREB) shut-off signaling pathway. Stimulates outgrowth of olfactory axons and migration of gonadotropin-releasing hormone (GnRH) and luteinizing-hormone-releasing hormone (LHRH) neuronal cells. This Homo sapiens (Human) protein is NMDA receptor synaptonuclear signaling and neuronal migration factor (NSMF).